A 366-amino-acid polypeptide reads, in one-letter code: Agamous-like MADS-box protein AGL36 (366 aa).

The MADS-box domain maps to 1–59 (MKKVKLSLIANERSRKTSFIKRKDGIFKKLHELSTLCGVQACALIYSPFIPVPESWPSR). Residues 86–115 (TYLMERITKAKEQLKNLAAENRELQVRRFM) are a coiled coil.

In terms of assembly, interacts with AGL62.

It is found in the nucleus. In terms of biological role, probable transcription factor. The chain is Agamous-like MADS-box protein AGL36 (AGL36) from Arabidopsis thaliana (Mouse-ear cress).